The chain runs to 330 residues: Pantothenate kinase (330 aa).

Residue 108 to 115 (GSVAVGKS) participates in ATP binding.

It belongs to the prokaryotic pantothenate kinase family.

Its subcellular location is the cytoplasm. The enzyme catalyses (R)-pantothenate + ATP = (R)-4'-phosphopantothenate + ADP + H(+). Its pathway is cofactor biosynthesis; coenzyme A biosynthesis; CoA from (R)-pantothenate: step 1/5. In Allorhizobium ampelinum (strain ATCC BAA-846 / DSM 112012 / S4) (Agrobacterium vitis (strain S4)), this protein is Pantothenate kinase.